The primary structure comprises 185 residues: Large ribosomal subunit protein uL6 (185 aa).

This sequence belongs to the universal ribosomal protein uL6 family. In terms of assembly, part of the 50S ribosomal subunit.

Its function is as follows. This protein binds to the 23S rRNA, and is important in its secondary structure. It is located near the subunit interface in the base of the L7/L12 stalk, and near the tRNA binding site of the peptidyltransferase center. The protein is Large ribosomal subunit protein uL6 of Staphylothermus marinus (strain ATCC 43588 / DSM 3639 / JCM 9404 / F1).